The following is a 451-amino-acid chain: Phosphoglucosamine mutase (451 aa).

Catalysis depends on Ser102, which acts as the Phosphoserine intermediate. Positions 102, 243, 245, and 247 each coordinate Mg(2+). At Ser102 the chain carries Phosphoserine.

This sequence belongs to the phosphohexose mutase family. Mg(2+) is required as a cofactor. In terms of processing, activated by phosphorylation.

The enzyme catalyses alpha-D-glucosamine 1-phosphate = D-glucosamine 6-phosphate. Catalyzes the conversion of glucosamine-6-phosphate to glucosamine-1-phosphate. This chain is Phosphoglucosamine mutase, found in Salinispora tropica (strain ATCC BAA-916 / DSM 44818 / JCM 13857 / NBRC 105044 / CNB-440).